The chain runs to 43 residues: Potassium channel toxin gamma-KTx 4.8 (43 aa).

4 disulfide bridges follow: cysteine 5/cysteine 23, cysteine 11/cysteine 34, cysteine 20/cysteine 39, and cysteine 24/cysteine 41.

This sequence belongs to the ergtoxin family. Gamma-KTx 4 subfamily. In terms of tissue distribution, expressed by the venom gland.

Its subcellular location is the secreted. Functionally, reversibly blocks Kv11/ERG potassium channels. This chain is Potassium channel toxin gamma-KTx 4.8, found in Centruroides elegans (Bark scorpion).